Reading from the N-terminus, the 156-residue chain is ATP synthase subunit b (156 aa).

Residues 7-29 (LFAQMVVFLVLAWFTMKFVWPPL) form a helical membrane-spanning segment.

This sequence belongs to the ATPase B chain family. In terms of assembly, F-type ATPases have 2 components, F(1) - the catalytic core - and F(0) - the membrane proton channel. F(1) has five subunits: alpha(3), beta(3), gamma(1), delta(1), epsilon(1). F(0) has three main subunits: a(1), b(2) and c(10-14). The alpha and beta chains form an alternating ring which encloses part of the gamma chain. F(1) is attached to F(0) by a central stalk formed by the gamma and epsilon chains, while a peripheral stalk is formed by the delta and b chains.

The protein localises to the cell inner membrane. In terms of biological role, f(1)F(0) ATP synthase produces ATP from ADP in the presence of a proton or sodium gradient. F-type ATPases consist of two structural domains, F(1) containing the extramembraneous catalytic core and F(0) containing the membrane proton channel, linked together by a central stalk and a peripheral stalk. During catalysis, ATP synthesis in the catalytic domain of F(1) is coupled via a rotary mechanism of the central stalk subunits to proton translocation. Component of the F(0) channel, it forms part of the peripheral stalk, linking F(1) to F(0). The chain is ATP synthase subunit b from Burkholderia pseudomallei (strain 668).